The sequence spans 354 residues: tRNA N6-adenosine threonylcarbamoyltransferase (354 aa).

The Fe cation site is built by H116 and H120. Residues 139–143 (LVSGG), D172, G185, and N281 each bind substrate. D309 contributes to the Fe cation binding site.

The protein belongs to the KAE1 / TsaD family. The cofactor is Fe(2+).

It localises to the cytoplasm. The catalysed reaction is L-threonylcarbamoyladenylate + adenosine(37) in tRNA = N(6)-L-threonylcarbamoyladenosine(37) in tRNA + AMP + H(+). In terms of biological role, required for the formation of a threonylcarbamoyl group on adenosine at position 37 (t(6)A37) in tRNAs that read codons beginning with adenine. Is involved in the transfer of the threonylcarbamoyl moiety of threonylcarbamoyl-AMP (TC-AMP) to the N6 group of A37, together with TsaE and TsaB. TsaD likely plays a direct catalytic role in this reaction. This Parasynechococcus marenigrum (strain WH8102) protein is tRNA N6-adenosine threonylcarbamoyltransferase.